A 382-amino-acid polypeptide reads, in one-letter code: MKKAVHFGAGNIGRGFIGQILFENGFAIDFVDVNDKIINALNERHSYDIEIAEDGKRHITVSNVAGINNKENPQAVIDAVAETELITTAIGPNILPFIAQLIAKGIEKRRESQNQTPLDIIACENMIGGSAFLWQEVQKYLSADGLAFAKDYIGFPNAAVDRIVPAQVHEDPLFVVVEPFSEWVVETAAMKNPDLKLSSVHYEENLEPFIERKLFSVNSGHATTAYTGAYFGAKTVLEALKDQQVKEQVKAVLGEIRQLLMAKWQFKENDLKVYHDIIISRFENPYIVDDVTRVARTPIRKLGYDERFIRPIRELKDRGLSYEYLLQTVAYVFHYKDSNDEQSVQLKLLLQEKSLKAVVKEVTGLTDAALIEEIVTSVESLD.

Residue 4–15 (AVHFGAGNIGRG) coordinates NAD(+).

Belongs to the mannitol dehydrogenase family. In terms of assembly, monomer.

It carries out the reaction D-mannitol 1-phosphate + NAD(+) = beta-D-fructose 6-phosphate + NADH + H(+). In Streptococcus mutans serotype c (strain ATCC 700610 / UA159), this protein is Mannitol-1-phosphate 5-dehydrogenase (mtlD).